Consider the following 135-residue polypeptide: Lactoylglutathione lyase (135 aa).

The region spanning 2-126 is the VOC domain; the sequence is QILHTMLRVG…DGYKIEFIEN (125 aa). Ni(2+) is bound at residue His5. A substrate-binding site is contributed by Arg9. Glu56 contacts Ni(2+). 2 residues coordinate substrate: Asn60 and His74. His74 and Glu122 together coordinate Ni(2+). Glu122 serves as the catalytic Proton donor/acceptor.

This sequence belongs to the glyoxalase I family. As to quaternary structure, homodimer. It depends on Ni(2+) as a cofactor.

The enzyme catalyses (R)-S-lactoylglutathione = methylglyoxal + glutathione. It functions in the pathway secondary metabolite metabolism; methylglyoxal degradation; (R)-lactate from methylglyoxal: step 1/2. Its function is as follows. Catalyzes the conversion of hemimercaptal, formed from methylglyoxal and glutathione, to S-lactoylglutathione. The chain is Lactoylglutathione lyase (gloA) from Haemophilus influenzae (strain ATCC 51907 / DSM 11121 / KW20 / Rd).